Reading from the N-terminus, the 141-residue chain is Nucleoside diphosphate kinase (141 aa).

ATP is bound by residues K9, F57, R85, T91, R102, and N112. H115 serves as the catalytic Pros-phosphohistidine intermediate.

This sequence belongs to the NDK family. Homotetramer. Mg(2+) serves as cofactor.

Its subcellular location is the cytoplasm. It catalyses the reaction a 2'-deoxyribonucleoside 5'-diphosphate + ATP = a 2'-deoxyribonucleoside 5'-triphosphate + ADP. It carries out the reaction a ribonucleoside 5'-diphosphate + ATP = a ribonucleoside 5'-triphosphate + ADP. Major role in the synthesis of nucleoside triphosphates other than ATP. The ATP gamma phosphate is transferred to the NDP beta phosphate via a ping-pong mechanism, using a phosphorylated active-site intermediate. The polypeptide is Nucleoside diphosphate kinase (Chlamydia felis (strain Fe/C-56) (Chlamydophila felis)).